An 85-amino-acid polypeptide reads, in one-letter code: ATP synthase subunit c (85 aa).

2 consecutive transmembrane segments (helical) span residues methionine 1–glycine 21 and leucine 53–isoleucine 73.

The protein belongs to the ATPase C chain family. In terms of assembly, F-type ATPases have 2 components, F(1) - the catalytic core - and F(0) - the membrane proton channel. F(1) has five subunits: alpha(3), beta(3), gamma(1), delta(1), epsilon(1). F(0) has three main subunits: a(1), b(2) and c(10-14). The alpha and beta chains form an alternating ring which encloses part of the gamma chain. F(1) is attached to F(0) by a central stalk formed by the gamma and epsilon chains, while a peripheral stalk is formed by the delta and b chains.

Its subcellular location is the cell inner membrane. Functionally, f(1)F(0) ATP synthase produces ATP from ADP in the presence of a proton or sodium gradient. F-type ATPases consist of two structural domains, F(1) containing the extramembraneous catalytic core and F(0) containing the membrane proton channel, linked together by a central stalk and a peripheral stalk. During catalysis, ATP synthesis in the catalytic domain of F(1) is coupled via a rotary mechanism of the central stalk subunits to proton translocation. In terms of biological role, key component of the F(0) channel; it plays a direct role in translocation across the membrane. A homomeric c-ring of between 10-14 subunits forms the central stalk rotor element with the F(1) delta and epsilon subunits. This chain is ATP synthase subunit c, found in Dictyoglomus turgidum (strain DSM 6724 / Z-1310).